Consider the following 239-residue polypeptide: Short palate, lung and nasal epithelium carcinoma-associated protein 2A (239 aa).

Positions 1–20 (MVQLWKLVLLCGLLAGTSES) are cleaved as a signal peptide. A disulfide bridge connects residues Cys166 and Cys209.

Belongs to the BPI/LBP/Plunc superfamily. Plunc family. In terms of tissue distribution, detected in salivary tissues: parotid, submandibular and sublingual glands.

Its subcellular location is the secreted. This is Short palate, lung and nasal epithelium carcinoma-associated protein 2A (SPLUNC2A) from Bos taurus (Bovine).